The primary structure comprises 205 residues: Peptidyl-tRNA hydrolase (205 aa).

Tyr14 is a binding site for tRNA. Residue His19 is the Proton acceptor of the active site. Residues Tyr68, Asn70, and Asn116 each coordinate tRNA.

Belongs to the PTH family. In terms of assembly, monomer.

Its subcellular location is the cytoplasm. It carries out the reaction an N-acyl-L-alpha-aminoacyl-tRNA + H2O = an N-acyl-L-amino acid + a tRNA + H(+). Functionally, hydrolyzes ribosome-free peptidyl-tRNAs (with 1 or more amino acids incorporated), which drop off the ribosome during protein synthesis, or as a result of ribosome stalling. Its function is as follows. Catalyzes the release of premature peptidyl moieties from peptidyl-tRNA molecules trapped in stalled 50S ribosomal subunits, and thus maintains levels of free tRNAs and 50S ribosomes. This chain is Peptidyl-tRNA hydrolase, found in Caulobacter vibrioides (strain ATCC 19089 / CIP 103742 / CB 15) (Caulobacter crescentus).